The following is a 177-amino-acid chain: Large ribosomal subunit protein uL6 (177 aa).

This sequence belongs to the universal ribosomal protein uL6 family. In terms of assembly, part of the 50S ribosomal subunit.

In terms of biological role, this protein binds to the 23S rRNA, and is important in its secondary structure. It is located near the subunit interface in the base of the L7/L12 stalk, and near the tRNA binding site of the peptidyltransferase center. This Mesorhizobium japonicum (strain LMG 29417 / CECT 9101 / MAFF 303099) (Mesorhizobium loti (strain MAFF 303099)) protein is Large ribosomal subunit protein uL6.